A 263-amino-acid chain; its full sequence is PDZ domain-containing protein 9 (263 aa).

Residues 30–109 (QTKLTVGSMG…GTILQIKVYR (80 aa)) enclose the PDZ domain.

This chain is PDZ domain-containing protein 9 (PDZD9), found in Bos taurus (Bovine).